Reading from the N-terminus, the 628-residue chain is E3 SUMO-protein ligase PIAS3 (628 aa).

The segment at 1-200 is interaction with CCAR2; sequence MAELGELKHM…QLRFCLCETS (200 aa). The region spanning 11 to 45 is the SAP domain; sequence VMSFRVSELQVLLGFAGRNKSGRKHELLAKALHLL. An LXXLL motif motif is present at residues 19–23; it reads LQVLL. Glycyl lysine isopeptide (Lys-Gly) (interchain with G-Cter in SUMO2) cross-links involve residues Lys46, Lys56, Lys230, and Lys307. Positions 115-280 constitute a PINIT domain; sequence MHPPLPQPVH…SLSVYLVRQL (166 aa). The SP-RING-type zinc finger occupies 312-393; it reads PDSEVATTSL…FMEILSSCSD (82 aa). Zn(2+) is bound by residues Cys343, His345, Cys366, and Cys369. An SUMO1-binding region spans residues 450-460; sequence LTIESSSDEED. Glycyl lysine isopeptide (Lys-Gly) (interchain with G-Cter in SUMO2) cross-links involve residues Lys466 and Lys482. The segment at 597-617 is disordered; it reads VAPGGALREGHGGPLPSGPSL.

The protein belongs to the PIAS family. As to quaternary structure, monomer. Binds SUMO1 and UBE2I. Interacts with BCL11A, HMGA2, IRF1, MITF and NCOA2. Interacts with STAT5; the interaction occurs on stimulation by PRL. Interacts with GFI1; the interaction relieves the inhibitory effect of PIAS3 on STAT3-mediated transcriptional activity. Interacts with AR, PLAG1 and ZFHX3. Interacts with STAT3; the interaction occurs on stimulation by IL6, CNTF or OSM and inhibits the DNA binding activity of STAT3. Interacts with MTA1. Interacts with CCAR2 (via N-terminus). Interacts with TRIM8. Interacts with PRDM1/Blimp-1. In terms of processing, sumoylated. In terms of tissue distribution, widely expressed.

It is found in the cytoplasm. It localises to the nucleus. The protein resides in the nucleus speckle. It functions in the pathway protein modification; protein sumoylation. Its function is as follows. Functions as an E3-type small ubiquitin-like modifier (SUMO) ligase, stabilizing the interaction between UBE2I and the substrate, and as a SUMO-tethering factor. Plays a crucial role as a transcriptional coregulation in various cellular pathways, including the STAT pathway and the steroid hormone signaling pathway. Involved in regulating STAT3 signaling via inhibiting STAT3 DNA-binding and suppressing cell growth. Enhances the sumoylation of MTA1 and may participate in its paralog-selective sumoylation. Sumoylates CCAR2 which promotes its interaction with SIRT1. Diminishes the sumoylation of ZFHX3 by preventing the colocalization of ZFHX3 with SUMO1 in the nucleus. The protein is E3 SUMO-protein ligase PIAS3 (PIAS3) of Homo sapiens (Human).